Reading from the N-terminus, the 202-residue chain is Oocyte-secreted protein 1 (202 aa).

Residues 1–21 (MKPFVGLLGLLLLLSFMKTCA) form the signal peptide. Residues 157 to 183 (QPNLSTSSEDHHVSTEPWASETSRSEA) are disordered.

Belongs to the PLAC1 family. In terms of tissue distribution, expressed in oocytes in primary through antral-stage follicles. Expressed in liver and ovary.

The protein resides in the secreted. In terms of biological role, may be involved in cell differentiation. This Mus musculus (Mouse) protein is Oocyte-secreted protein 1 (Oosp1).